The chain runs to 315 residues: MAPQRRGPPRIPEGSSAAERRRATSTKKDRLPREAQRTWLRIVAFGVGLALVTCLLWSSVGIDDDVAEVVARRGEVLEGRFIEVPCSEDYDGHRRFEGCTPRKCGRGVTDIVITREEAEQIRRIAEKGLSLGGSDGGASILDLHSGALSVGKHFVNLYRYFGDKIQNIFSEEDFQLYRDIRQKVQLTIAEAFGISASLLYLTKPTFFSRINSTEARTAHDEYWHAHVDKVTYGSFDYTSLLYLSDYLEDFGGGRFVFMEEGSNKTVEPRAGRVSFFTSGSENLHRVEKVLWGTRYAITIAFTCNPDHGIEDPVLT.

The disordered stretch occupies residues 1-31 (MAPQRRGPPRIPEGSSAAERRRATSTKKDRL). Over 1–41 (MAPQRRGPPRIPEGSSAAERRRATSTKKDRLPREAQRTWLR) the chain is Cytoplasmic. Basic and acidic residues predominate over residues 18 to 31 (AERRRATSTKKDRL). A helical; Signal-anchor for type II membrane protein membrane pass occupies residues 42–62 (IVAFGVGLALVTCLLWSSVGI). Over 63–315 (DDDVAEVVAR…DHGIEDPVLT (253 aa)) the chain is Lumenal. The 103-residue stretch at 203 to 305 (KPTFFSRINS…AITIAFTCNP (103 aa)) folds into the Fe2OG dioxygenase domain. A glycan (N-linked (GlcNAc...) asparagine) is linked at N211. Residues H226 and D228 each coordinate Fe cation. A glycan (N-linked (GlcNAc...) asparagine) is linked at N263. H284 contributes to the Fe cation binding site. Residue R294 is part of the active site. Residue R294 coordinates 2-oxoglutarate.

This sequence belongs to the OGFOD3 family. Requires Fe(2+) as cofactor. L-ascorbate is required as a cofactor.

It is found in the membrane. The sequence is that of 2-oxoglutarate and iron-dependent oxygenase domain-containing protein 3 (Ogfod3) from Mus musculus (Mouse).